Consider the following 138-residue polypeptide: Cystatin-11 (138 aa).

A signal peptide spans 1–26; the sequence is MMAEPWQALQLLLAILLTLMALPYQA. 2 cysteine pairs are disulfide-bonded: Cys94–Cys102 and Cys115–Cys135. The N-linked (GlcNAc...) asparagine glycan is linked to Asn132.

The protein belongs to the cystatin family. As to expression, detected in the epithelium and lumen of the epididymis, and in sperm (at protein level).

The protein localises to the secreted. Has antibacterial activity against the Gram-negative bacteria E.coli. May play a role in sperm maturation and fertilization. The polypeptide is Cystatin-11 (CST11) (Homo sapiens (Human)).